A 260-amino-acid polypeptide reads, in one-letter code: Glutathione S-transferase domain-containing protein DDB_G0274223 (260 aa).

A GST N-terminal domain is found at 7-96; it reads KVDYIFYTNN…YLAQKYNTFL (90 aa). The GST C-terminal domain maps to 102-233; sequence NPHENSDVIT…GFKTFNPSAL (132 aa).

Belongs to the GST superfamily.

In Dictyostelium discoideum (Social amoeba), this protein is Glutathione S-transferase domain-containing protein DDB_G0274223.